A 98-amino-acid chain; its full sequence is Peptide YY (98 aa).

The first 28 residues, 1–28 (MVAVRRPWPVTVAMLLILLACLGALVDA), serve as a signal peptide directing secretion. Serine 41 is modified (phosphoserine). Residue tyrosine 64 is modified to Tyrosine amide. A propeptide spanning residues 68-98 (DVPAALFSKLLFTDDSDSENLPFRPEGLDQW) is cleaved from the precursor.

The protein belongs to the NPY family. Post-translationally, the peptide YY form is cleaved at Pro-30 by the prolyl endopeptidase FAP (seprase) activity (in vitro) to generate peptide YY(3-36).

The protein resides in the secreted. In terms of biological role, this gut peptide inhibits exocrine pancreatic secretion, has a vasoconstrictory action and inhibitis jejunal and colonic mobility. This Mus musculus (Mouse) protein is Peptide YY (Pyy).